The primary structure comprises 308 residues: Olfactory receptor 4E2 (308 aa).

The Extracellular portion of the chain corresponds to 1-24 (MGALNQTRVTEFIFLGLTDNWVLE). Asparagine 5 carries N-linked (GlcNAc...) asparagine glycosylation. A helical membrane pass occupies residues 25–45 (ILFFVPFTVTYMLTLLGNFLI). At 46–57 (VVTIVFTPRLHN) the chain is on the cytoplasmic side. A helical transmembrane segment spans residues 58–78 (PMYFFLSNLSFIDICHSSVTV). Over 79–97 (PKMLEGLLLERKTISFDNC) the chain is Extracellular. A disulfide bridge links cysteine 97 with cysteine 179. Residues 98-118 (IAQLFFLHLFACSEIFLLTIM) form a helical membrane-spanning segment. Positions 105 and 109 each coordinate Cu cation. The Cytoplasmic segment spans residues 119–143 (AYDRYVAICIPLHYSNVMNMKVCVQ). The chain crosses the membrane as a helical span at residues 144-164 (LVFALWLGGTIHSLVQTFLTI). The Extracellular portion of the chain corresponds to 165-204 (RLPYCGPNIIDSYFCDVPPVIKLACTDTYLTGILIVSNSG). Residues 205–225 (TISLVCFLALVTSYTVILFSL) form a helical membrane-spanning segment. Topologically, residues 226–236 (RKQSAEGRRKA) are cytoplasmic. A helical transmembrane segment spans residues 237 to 257 (LSTCSAHFMVVALFFGPCIFL). Residues 258–268 (YTRPDSSFSID) are Extracellular-facing. Arginine 260 is a binding site for Cu cation. Residues 269–289 (KVVSVFYTVVTPLLNPLIYTL) form a helical membrane-spanning segment. Over 290-308 (RNEEVKTAMKHLRQRRICS) the chain is Cytoplasmic.

It belongs to the G-protein coupled receptor 1 family. As to expression, expressed in olfactory epithelium, specifically in the olfactory sensory neurons of the septal organ.

It is found in the cell membrane. Copper binding enhances receptor activity in response to odorant binding. In terms of biological role, olfactory receptor that is activated by the binding of organosulfur odorants with thioether groups such as (methylthio)methanethiol (MTMT) and bis(methylthiomethyl) disulfide. Also binds odorants cis-cyclooctene and tert-butyl mercaptan. The activity of this receptor is mediated by G proteins which activate adenylyl cyclase (Potential). In Mus musculus (Mouse), this protein is Olfactory receptor 4E2.